The primary structure comprises 220 residues: Deoxyribose-phosphate aldolase (220 aa).

Aspartate 89 acts as the Proton donor/acceptor in catalysis. Lysine 151 acts as the Schiff-base intermediate with acetaldehyde in catalysis. Lysine 180 functions as the Proton donor/acceptor in the catalytic mechanism.

It belongs to the DeoC/FbaB aldolase family. DeoC type 1 subfamily.

It is found in the cytoplasm. It catalyses the reaction 2-deoxy-D-ribose 5-phosphate = D-glyceraldehyde 3-phosphate + acetaldehyde. It participates in carbohydrate degradation; 2-deoxy-D-ribose 1-phosphate degradation; D-glyceraldehyde 3-phosphate and acetaldehyde from 2-deoxy-alpha-D-ribose 1-phosphate: step 2/2. In terms of biological role, catalyzes a reversible aldol reaction between acetaldehyde and D-glyceraldehyde 3-phosphate to generate 2-deoxy-D-ribose 5-phosphate. In Staphylococcus carnosus (strain TM300), this protein is Deoxyribose-phosphate aldolase.